The primary structure comprises 187 residues: Peptidyl-tRNA hydrolase (187 aa).

A tRNA-binding site is contributed by Tyr-15. His-20 functions as the Proton acceptor in the catalytic mechanism. Residues Phe-65, Asn-67, and Asn-113 each contribute to the tRNA site.

It belongs to the PTH family. In terms of assembly, monomer.

The protein resides in the cytoplasm. The catalysed reaction is an N-acyl-L-alpha-aminoacyl-tRNA + H2O = an N-acyl-L-amino acid + a tRNA + H(+). Functionally, hydrolyzes ribosome-free peptidyl-tRNAs (with 1 or more amino acids incorporated), which drop off the ribosome during protein synthesis, or as a result of ribosome stalling. Its function is as follows. Catalyzes the release of premature peptidyl moieties from peptidyl-tRNA molecules trapped in stalled 50S ribosomal subunits, and thus maintains levels of free tRNAs and 50S ribosomes. The sequence is that of Peptidyl-tRNA hydrolase from Elusimicrobium minutum (strain Pei191).